The chain runs to 144 residues: Eukaryotic translation initiation factor 1A, Y-chromosomal (144 aa).

Residues methionine 1 to glycine 15 are compositionally biased toward basic residues. Residues methionine 1–leucine 26 are disordered. The span at lysine 16–leucine 26 shows a compositional bias: basic and acidic residues. Residues glutamate 22–asparagine 96 form the S1-like domain. Lysine 88 participates in a covalent cross-link: Glycyl lysine isopeptide (Lys-Gly) (interchain with G-Cter in ubiquitin). The disordered stretch occupies residues lysine 114 to isoleucine 144. Residues glycine 124–isoleucine 144 are compositionally biased toward acidic residues.

The protein belongs to the eIF-1A family. As to quaternary structure, component of the 43S pre-initiation complex (43S PIC), which is composed of the 40S ribosomal subunit, EIF1, eIF1A (EIF1AX), eIF3 complex, EIF5 and eIF2-GTP-initiator tRNA complex (eIF2 ternary complex). Interacts with EIF5; this interaction contributes to the maintenance of EIF1 within the open 43S PIC. Interacts through its C-terminal domain (CTD) with the CTD of EIF5B; from the location of the start codon by the 43S complex until the formation of the 80S complex. As to expression, ubiquitous.

It localises to the cytoplasm. In terms of biological role, component of the 43S pre-initiation complex (43S PIC), which binds to the mRNA cap-proximal region, scans mRNA 5'-untranslated region, and locates the initiation codon. This protein enhances formation of the cap-proximal complex. Together with EIF1, facilitates scanning, start codon recognition, promotion of the assembly of 48S complex at the initiation codon (43S PIC becomes 48S PIC after the start codon is reached), and dissociation of aberrant complexes. After start codon location, together with EIF5B orients the initiator methionine-tRNA in a conformation that allows 60S ribosomal subunit joining to form the 80S initiation complex. Is released after 80S initiation complex formation, just after GTP hydrolysis by EIF5B, and before release of EIF5B. Its globular part is located in the A site of the 40S ribosomal subunit. Its interaction with EIF5 during scanning contribute to the maintenance of EIF1 within the open 43S PIC. In contrast to yeast orthologs, does not bind EIF1. This is Eukaryotic translation initiation factor 1A, Y-chromosomal (EIF1AY) from Homo sapiens (Human).